A 539-amino-acid polypeptide reads, in one-letter code: Cytochrome P450 monooxygenase tenB (539 aa).

A helical membrane pass occupies residues 13-33; the sequence is LGYYEKVAGVLGFLSIALLFW. The tract at residues 439 to 460 is disordered; sequence PFRFSRASKDDDDDGKSTSSHA. Heme is bound at residue C481.

This sequence belongs to the cytochrome P450 family. The cofactor is heme.

The protein resides in the membrane. It functions in the pathway secondary metabolite biosynthesis. Functionally, cytochrome P450 monooxygenase; part of the gene cluster that mediates the biosynthesis of tenellin-type 2-pyridones, iron-chelating compounds involved in iron stress tolerance, competition with the natural competitor fungus Metarhizium robertsii and insect hosts infection. TenB catalyzes the selective N-hydroxylation of the 2-pyridone nitrogen of yield tellinin and 15-hydroxytellenin (15-HT), respectively. The pathway begins with the assembly of the polyketide-amino acid backbone by the hybrid PKS-NRPS tenS with the help of the enoyl reductase tenC. These enzymes catalyze the synthesis of the pyrrolidine-2-dione intermediates pretellinin A, 11-hydropretellenin A, 12-hydropretellenin A, 13-hydropretellenin A, 14-hydropretellenin A, 12-oxopretellenin A and prototellinin D. The cytochrome P450 monooxygenase tenA then catalyzes an oxidative ring expansion of pretenellin A and 14-hydropretellenin A to form the 2-pyridone core, leading to pretenellin B and pyridovericin, respectively. The cytochrome P450 monooxygenase tenB is then required for the selective N-hydroxylation of the 2-pyridone nitrogen of yield tellinin and 15-hydroxytellenin (15-HT), respectively. The UDP-glucosyltransferase GT1 and the methyltransferase MT1, located outside the tenS gene cluster, contribute to the stepwise glycosylation and methylation of 15-HT to obtain the glycoside pyridovericin-N-O-(4-O-methyl-beta-D-glucopyranoside) (PMGP). Additional related compounds such as 1-O-methyl-15-HT, (8Z)-1-O-methyl-15-HT, and O-methyltenellin A are also produced but the enzymes involved in their biosynthesis have still to be determined. The polypeptide is Cytochrome P450 monooxygenase tenB (Beauveria bassiana (White muscardine disease fungus)).